The chain runs to 354 residues: tRNA N6-adenosine threonylcarbamoyltransferase (354 aa).

Positions 111 and 115 each coordinate Fe cation. Residues 134-138 (LVSGG), D167, G180, and N279 each bind substrate. Residue D319 coordinates Fe cation.

Belongs to the KAE1 / TsaD family. Fe(2+) is required as a cofactor.

The protein localises to the cytoplasm. It carries out the reaction L-threonylcarbamoyladenylate + adenosine(37) in tRNA = N(6)-L-threonylcarbamoyladenosine(37) in tRNA + AMP + H(+). Functionally, required for the formation of a threonylcarbamoyl group on adenosine at position 37 (t(6)A37) in tRNAs that read codons beginning with adenine. Is involved in the transfer of the threonylcarbamoyl moiety of threonylcarbamoyl-AMP (TC-AMP) to the N6 group of A37, together with TsaE and TsaB. TsaD likely plays a direct catalytic role in this reaction. The polypeptide is tRNA N6-adenosine threonylcarbamoyltransferase (Neisseria meningitidis serogroup A / serotype 4A (strain DSM 15465 / Z2491)).